Here is a 276-residue protein sequence, read N- to C-terminus: Large ribosomal subunit protein uL2 (276 aa).

Positions V224–R258 are disordered. The segment covering D230–E242 has biased composition (basic and acidic residues).

Belongs to the universal ribosomal protein uL2 family. In terms of assembly, part of the 50S ribosomal subunit. Forms a bridge to the 30S subunit in the 70S ribosome.

One of the primary rRNA binding proteins. Required for association of the 30S and 50S subunits to form the 70S ribosome, for tRNA binding and peptide bond formation. It has been suggested to have peptidyltransferase activity; this is somewhat controversial. Makes several contacts with the 16S rRNA in the 70S ribosome. The chain is Large ribosomal subunit protein uL2 from Polynucleobacter necessarius subsp. necessarius (strain STIR1).